An 807-amino-acid polypeptide reads, in one-letter code: Leucine--tRNA ligase (807 aa).

The 'HIGH' region signature appears at 40–51 (PYPSGSGLHVGH). The 'KMSKS' region motif lies at 576-580 (KMSKS). K579 provides a ligand contact to ATP.

It belongs to the class-I aminoacyl-tRNA synthetase family.

Its subcellular location is the cytoplasm. The enzyme catalyses tRNA(Leu) + L-leucine + ATP = L-leucyl-tRNA(Leu) + AMP + diphosphate. The sequence is that of Leucine--tRNA ligase from Chlorobaculum parvum (strain DSM 263 / NCIMB 8327) (Chlorobium vibrioforme subsp. thiosulfatophilum).